An 87-amino-acid chain; its full sequence is Long neurotoxin LlLong (87 aa).

Positions 1 to 20 (KTLLLTLVVVTIICLDFGYT) are cleaved as a signal peptide. Intrachain disulfides connect cysteine 23–cysteine 41, cysteine 34–cysteine 62, cysteine 47–cysteine 51, cysteine 66–cysteine 77, and cysteine 78–cysteine 83.

This sequence belongs to the three-finger toxin family. Long-chain subfamily. Type II alpha-neurotoxin sub-subfamily. In terms of tissue distribution, expressed by the venom gland.

The protein resides in the secreted. Binds with high affinity to muscular (alpha-1/CHRNA1) and neuronal (alpha-7/CHRNA7) nicotinic acetylcholine receptor (nAChR) and inhibits acetylcholine from binding to the receptor, thereby impairing neuromuscular and neuronal transmission. The protein is Long neurotoxin LlLong of Laticauda laticaudata (Blue-ringed sea krait).